We begin with the raw amino-acid sequence, 312 residues long: Very-long-chain 3-oxoacyl-CoA reductase (312 aa).

Transmembrane regions (helical) follow at residues V33–V53, G181–Y201, and H274–M294. G48–L77 is a binding site for NADP(+). S188 is a substrate binding site. The Proton acceptor role is filled by Y201.

The protein belongs to the short-chain dehydrogenases/reductases (SDR) family. 17-beta-HSD 3 subfamily. In terms of tissue distribution, brain.

It is found in the endoplasmic reticulum membrane. It catalyses the reaction a very-long-chain (3R)-3-hydroxyacyl-CoA + NADP(+) = a very-long-chain 3-oxoacyl-CoA + NADPH + H(+). The enzyme catalyses 17beta-estradiol + NAD(+) = estrone + NADH + H(+). It carries out the reaction 17beta-estradiol + NADP(+) = estrone + NADPH + H(+). The catalysed reaction is 3-oxooctadecanoyl-CoA + NADPH + H(+) = (3R)-hydroxyoctadecanoyl-CoA + NADP(+). It catalyses the reaction (7Z,10Z,13Z,16Z)-3-oxodocosatetraenoyl-CoA + NADPH + H(+) = (3R)-hydroxy-(7Z,10Z,13Z,16Z)-docosatetraenoyl-CoA + NADP(+). The enzyme catalyses 3-oxo-(7Z,10Z,13Z,16Z,19Z)-docosapentaenoyl-CoA + NADPH + H(+) = (3R)-hydroxy-(7Z,10Z,13Z,16Z,19Z)-docosapentaenoyl-CoA + NADP(+). It carries out the reaction (8Z,11Z,14Z)-3-oxoeicosatrienoyl-CoA + NADPH + H(+) = (3R)-hydroxy-(8Z,11Z,14Z)-eicosatrienoyl-CoA + NADP(+). It participates in lipid metabolism; fatty acid biosynthesis. Its pathway is steroid biosynthesis; estrogen biosynthesis. In terms of biological role, catalyzes the second of the four reactions of the long-chain fatty acids elongation cycle. This endoplasmic reticulum-bound enzymatic process, allows the addition of two carbons to the chain of long- and very long-chain fatty acids/VLCFAs per cycle. This enzyme has a 3-ketoacyl-CoA reductase activity, reducing 3-ketoacyl-CoA to 3-hydroxyacyl-CoA, within each cycle of fatty acid elongation. Thereby, it may participate in the production of VLCFAs of different chain lengths that are involved in multiple biological processes as precursors of membrane lipids and lipid mediators. May also catalyze the transformation of estrone (E1) into estradiol (E2) and play a role in estrogen formation. The chain is Very-long-chain 3-oxoacyl-CoA reductase (HSD17B12) from Anas platyrhynchos (Mallard).